A 325-amino-acid polypeptide reads, in one-letter code: Phospho-N-acetylmuramoyl-pentapeptide-transferase (325 aa).

9 helical membrane passes run 7–27 (LFVLILSFAAAVIMSPLFIPF), 57–77 (IVIVLSIFISALAIGIAITGF), 81–101 (LLLLMVVTLGYGIVGFVDDYL), 122–142 (VIAAIFYIGLLAIGFDTFIAI), 146–166 (TFGFDLGWLYLILIVLMLLGA), 186–206 (IAFGAFAILAWSGGFIDTALF), 227–247 (VFMGDTGSLALGGAIAAIAIL), 252–272 (LMLIIVGGVFVIETLSVIIQV), and 302–322 (VVVTFWLVGMIFAIMGVYIGV).

The protein belongs to the glycosyltransferase 4 family. MraY subfamily. The cofactor is Mg(2+).

It localises to the cell membrane. The catalysed reaction is UDP-N-acetyl-alpha-D-muramoyl-L-alanyl-gamma-D-glutamyl-meso-2,6-diaminopimeloyl-D-alanyl-D-alanine + di-trans,octa-cis-undecaprenyl phosphate = di-trans,octa-cis-undecaprenyl diphospho-N-acetyl-alpha-D-muramoyl-L-alanyl-D-glutamyl-meso-2,6-diaminopimeloyl-D-alanyl-D-alanine + UMP. The protein operates within cell wall biogenesis; peptidoglycan biosynthesis. In terms of biological role, catalyzes the initial step of the lipid cycle reactions in the biosynthesis of the cell wall peptidoglycan: transfers peptidoglycan precursor phospho-MurNAc-pentapeptide from UDP-MurNAc-pentapeptide onto the lipid carrier undecaprenyl phosphate, yielding undecaprenyl-pyrophosphoryl-MurNAc-pentapeptide, known as lipid I. The polypeptide is Phospho-N-acetylmuramoyl-pentapeptide-transferase (Shouchella clausii (strain KSM-K16) (Alkalihalobacillus clausii)).